The primary structure comprises 186 residues: MKFATLAGKFLIAVPSLADPFFERTVLYLCAHNEDGALGLVINQPLDTTMSQMAGYLELDWQRPGVDRVYMGGPVSPEQGFVLFEQALDLPGIMMLPDDLYMGTNPDIIRLMGRAGAQERFLFALGYAGWEAGQLEHELQENSWLVCDAQRSILFDMGYAQRWEAAIRSMGIDPALLVDASHGFAN.

This sequence belongs to the UPF0301 (AlgH) family.

This chain is UPF0301 protein Mmc1_0726, found in Magnetococcus marinus (strain ATCC BAA-1437 / JCM 17883 / MC-1).